The following is a 306-amino-acid chain: Fe-S cluster assembly protein dre2 (306 aa).

The segment at 21 to 150 (NVTQKRSLLL…EKPQYQEAAV (130 aa)) is N-terminal SAM-like domain. Residues 151 to 196 (PLRFGANKRKNKISPEPVKIESVGFVDNYDDDELINEDDLLDEEDL) form a linker region. Residues C206, C218, C221, and C223 each contribute to the [2Fe-2S] cluster site. The tract at residues 206 to 223 (CQPETAKKRRRACKDCTC) is fe-S binding site A. The [4Fe-4S] cluster site is built by C269, C272, C280, and C283. Short sequence motifs (cx2C motif) lie at residues 269-272 (CNSC) and 280-283 (CASC). Residues 269-283 (CNSCSLGDAFRCASC) are fe-S binding site B.

The protein belongs to the anamorsin family. In terms of assembly, monomer. Interacts with tah18. Interacts with mia40. The cofactor is [2Fe-2S] cluster. [4Fe-4S] cluster serves as cofactor.

It localises to the cytoplasm. The protein resides in the mitochondrion intermembrane space. Its function is as follows. Component of the cytosolic iron-sulfur (Fe-S) protein assembly (CIA) machinery required for the maturation of extramitochondrial Fe-S proteins. Part of an electron transfer chain functioning in an early step of cytosolic Fe-S biogenesis, facilitating the de novo assembly of a [4Fe-4S] cluster on the scaffold complex cfd1-nbp35. Electrons are transferred to dre2 from NADPH via the FAD- and FMN-containing protein tah18. Tah18-dre2 are also required for the assembly of the diferric tyrosyl radical cofactor of ribonucleotide reductase (RNR), probably by providing electrons for reduction during radical cofactor maturation in the catalytic small subunit rnr2. This chain is Fe-S cluster assembly protein dre2, found in Talaromyces stipitatus (strain ATCC 10500 / CBS 375.48 / QM 6759 / NRRL 1006) (Penicillium stipitatum).